The primary structure comprises 404 residues: tRNA pseudouridine(31) synthase (404 aa).

Residue Asp168 is part of the active site.

The protein belongs to the pseudouridine synthase RluA family.

Its subcellular location is the cytoplasm. It is found in the mitochondrion. It carries out the reaction uridine(31) in tRNA = pseudouridine(31) in tRNA. Functionally, catalyzes the formation of pseudouridine at position 31 in the psi GC loop of tRNAS. This Saccharomyces cerevisiae (strain ATCC 204508 / S288c) (Baker's yeast) protein is tRNA pseudouridine(31) synthase (PUS6).